Here is a 60-residue protein sequence, read N- to C-terminus: MAQIKITLTKSPIGRKPEQRKTVVALGLGKLNSSVVKEDNAAIRGMVTAISHLVTVEDVK.

Belongs to the universal ribosomal protein uL30 family. In terms of assembly, part of the 50S ribosomal subunit.

This chain is Large ribosomal subunit protein uL30, found in Streptococcus pyogenes serotype M1.